A 565-amino-acid polypeptide reads, in one-letter code: DNA mismatch repair protein MutL (565 aa).

It belongs to the DNA mismatch repair MutL/HexB family.

This protein is involved in the repair of mismatches in DNA. It is required for dam-dependent methyl-directed DNA mismatch repair. May act as a 'molecular matchmaker', a protein that promotes the formation of a stable complex between two or more DNA-binding proteins in an ATP-dependent manner without itself being part of a final effector complex. This chain is DNA mismatch repair protein MutL, found in Desulforudis audaxviator (strain MP104C).